A 261-amino-acid polypeptide reads, in one-letter code: Imidazole glycerol phosphate synthase subunit HisF (261 aa).

Active-site residues include Asp16 and Asp135.

Belongs to the HisA/HisF family. Heterodimer of HisH and HisF.

The protein localises to the cytoplasm. It catalyses the reaction 5-[(5-phospho-1-deoxy-D-ribulos-1-ylimino)methylamino]-1-(5-phospho-beta-D-ribosyl)imidazole-4-carboxamide + L-glutamine = D-erythro-1-(imidazol-4-yl)glycerol 3-phosphate + 5-amino-1-(5-phospho-beta-D-ribosyl)imidazole-4-carboxamide + L-glutamate + H(+). It participates in amino-acid biosynthesis; L-histidine biosynthesis; L-histidine from 5-phospho-alpha-D-ribose 1-diphosphate: step 5/9. Functionally, IGPS catalyzes the conversion of PRFAR and glutamine to IGP, AICAR and glutamate. The HisF subunit catalyzes the cyclization activity that produces IGP and AICAR from PRFAR using the ammonia provided by the HisH subunit. This Mycobacterium leprae (strain Br4923) protein is Imidazole glycerol phosphate synthase subunit HisF.